A 412-amino-acid polypeptide reads, in one-letter code: 23S rRNA (uracil(747)-C(5))-methyltransferase (412 aa).

Residues C63, C69, C72, and C139 each contribute to the [4Fe-4S] cluster site. Residues Q255, Y281, E302, and D343 each coordinate S-adenosyl-L-methionine. The Nucleophile role is filled by C369.

It belongs to the class I-like SAM-binding methyltransferase superfamily. RNA M5U methyltransferase family.

The enzyme catalyses uridine(747) in 23S rRNA + S-adenosyl-L-methionine = 5-methyluridine(747) in 23S rRNA + S-adenosyl-L-homocysteine + H(+). Catalyzes the formation of 5-methyl-uridine at position equivalent to 747 (m5U747) in 23S rRNA. The sequence is that of 23S rRNA (uracil(747)-C(5))-methyltransferase from Pyrococcus horikoshii (strain ATCC 700860 / DSM 12428 / JCM 9974 / NBRC 100139 / OT-3).